A 685-amino-acid polypeptide reads, in one-letter code: Translation factor GUF1 homolog, mitochondrial (685 aa).

A mitochondrion-targeting transit peptide spans 1 to 54 (MFSRLLNRGNGGVNKNITSGLLLRRTTTTTTRLSYINNSPTLSIRSFCSKSTTI). The 200-residue stretch at 68 to 267 (DRIRNFSIIA…AVIDRIPPPQ (200 aa)) folds into the tr-type G domain. GTP-binding positions include 77-84 (AHIDHGKT), 160-164 (DTPGH), and 214-217 (NKID).

The protein belongs to the TRAFAC class translation factor GTPase superfamily. Classic translation factor GTPase family. LepA subfamily.

The protein resides in the mitochondrion inner membrane. It carries out the reaction GTP + H2O = GDP + phosphate + H(+). Functionally, promotes mitochondrial protein synthesis. May act as a fidelity factor of the translation reaction, by catalyzing a one-codon backward translocation of tRNAs on improperly translocated ribosomes. Binds to mitochondrial ribosomes in a GTP-dependent manner. The protein is Translation factor GUF1 homolog, mitochondrial (guf1) of Dictyostelium discoideum (Social amoeba).